A 1578-amino-acid chain; its full sequence is Chitinase ChiA (1578 aa).

Residues 1–19 (MKHYYRLLFLLLFPLLASA) form the signal peptide. A GH18 1 domain is found at 25–466 (KKVVGYYAQW…NQVDTSFGSV (442 aa)). The tract at residues 26–446 (KVVGYYAQWS…GGMIWELSQD (421 aa)) is GH18N. Residues 92–93 (DA) and 119–122 (GGWT) each bind chitin. E162 serves as the catalytic Proton donor. Chitin is bound by residues Y163, 249–252 (FGYD), and W441. One can recognise a CNA-B domain in the interval 485–536 (TDVTVELRNASNAVIQTVVSANGNFAFNNLTSGQNYSLTALKATYTFTPVTL). Residues 1142–1462 (KIILGYAHSW…GLMTWSVNWD (321 aa)) are GH18C. The GH18 2 domain occupies 1142–1483 (KIILGYAHSW…KAYAAYFASQ (342 aa)). E1264 serves as the catalytic Proton donor. The interval 1473 to 1578 (SKAYAAYFAS…KSFKVMNFLN (106 aa)) is CTD.

Belongs to the glycosyl hydrolase 18 family. Chitinase class II subfamily.

The protein resides in the secreted. It carries out the reaction Random endo-hydrolysis of N-acetyl-beta-D-glucosaminide (1-&gt;4)-beta-linkages in chitin and chitodextrins.. In terms of biological role, major extracellular chitinase, which is essential for chitin utilization. This is Chitinase ChiA (chiA) from Flavobacterium johnsoniae (strain ATCC 17061 / DSM 2064 / JCM 8514 / BCRC 14874 / CCUG 350202 / NBRC 14942 / NCIMB 11054 / UW101) (Cytophaga johnsonae).